Here is a 408-residue protein sequence, read N- to C-terminus: Peptidase T (408 aa).

Histidine 78 is a binding site for Zn(2+). Residue aspartate 80 is part of the active site. Aspartate 140 serves as a coordination point for Zn(2+). The active-site Proton acceptor is glutamate 173. Residues glutamate 174, aspartate 196, and histidine 379 each coordinate Zn(2+).

The protein belongs to the peptidase M20B family. Requires Zn(2+) as cofactor.

Its subcellular location is the cytoplasm. It carries out the reaction Release of the N-terminal residue from a tripeptide.. Cleaves the N-terminal amino acid of tripeptides. The polypeptide is Peptidase T (Escherichia coli O6:K15:H31 (strain 536 / UPEC)).